The primary structure comprises 103 residues: Large ribosomal subunit protein bL36m (103 aa).

It belongs to the bacterial ribosomal protein bL36 family. In terms of assembly, component of the mitochondrial large ribosomal subunit (mt-LSU). Mature mammalian 55S mitochondrial ribosomes consist of a small (28S) and a large (39S) subunit. The 28S small subunit contains a 12S ribosomal RNA (12S mt-rRNA) and 30 different proteins. The 39S large subunit contains a 16S rRNA (16S mt-rRNA), a copy of mitochondrial valine transfer RNA (mt-tRNA(Val)), which plays an integral structural role, and 52 different proteins. bL36m has a zinc binding site.

Its subcellular location is the mitochondrion. The sequence is that of Large ribosomal subunit protein bL36m (MRPL36) from Homo sapiens (Human).